The following is a 78-amino-acid chain: uncharacterized protein (78 aa).

The disordered stretch occupies residues 51–78; the sequence is GGKWDGGGSGGKWNGGGGSGGGSWKKWN.

This is an uncharacterized protein from Dictyostelium discoideum (Social amoeba).